The following is a 1063-amino-acid chain: MFERIISFAIQQRWLVLLAVFGMAGLGIFSYNRLPIDAVPDITNVQVQVNTSAPGYSPLETEQRATYPIEVVMAGLPGLEQTRSLSRYGLSQVTVIFKDGTDVYFARQLVNQRIQEAKDNLPEGVVPAMGPISTGLGEIYLWTVEAEEGARKADGTAYTPTDLREIQDWVVRPQLRNVPGVTEINTIGGFNKQYLVAPSLERLASYGLTLTDVVNALNKNNDNVGAGYIERRGEQYLVRAPGQVASEDDIRNIIVGTAQGQPIRIRDIGDVEIGKELRTGAATENGKEVVLGTVFMLIGENSRAVSKAVDEKVASINRTMPEGVKIVTVYDRTRLVDKAIATVKKNLLEGAVLVIVILFLFLGNIRAALITATIIPLAMLFTFTGMVNYKISANLMSLGALDFGIIIDGAVVIVENCVRRLAHAQEHHGRPLTRSERFHEVFAAAKEARRPLIFGQLIIMIVYLPIFALTGVEGKMFHPMAFTVVLALLGAMILSVTFVPAAVALFIGERVAEKENRLMLWAKRRYEPLLEKSLANTAVVLTFAAVSIVLCVAIAARLGSEFIPNLNEGDIAIQALRIPGTSLSQSVEMQKTIETTLKAKFPEIERVFARTGTAEIASDLMPPNISDGYIMLKPEKDWPEPKKTHAELLSAIQEEAGKIPGNNYEFSQPIQLRFNELISGVRSDVAVKIFGDDNNVLSETAKKVSAVLQGIPGAQEVKVEQTTGLPMLTVKIDREKAARYGLNMSDVQDAVATGVGGRDSGTFFQGDRRFDIVVRLPEAVRGEVEALRRLPIPLPKGVDARTTFIPLSEVATLEMAPGPNQISRENGKRRIVISANVRGRDIGSFVPEAEAAIQSQVKIPAGYWMTWGGTFEQLQSATTRLQVVVPVALLLVFVLLFAMFNNIKDGLLVFTGIPFALTGGILALWIRGIPMSITAAVGFIALCGVAVLNGLVMLSFIRSLREEGHSLDSAVRVGALTRLRPVLMTALVASLGFVPMAIATGTGAEVQRPLATVVIGGILSSTALTLLVLPVLYRLAHRKDEDAEDTREPVTQTHQPDQGRQPA.

Helical transmembrane passes span 14–34 (WLVLLAVFGMAGLGIFSYNRL), 350–370 (GAVLVIVILFLFLGNIRAALI), 371–391 (TATIIPLAMLFTFTGMVNYKI), 395–415 (LMSLGALDFGIIIDGAVVIVE), 452–472 (LIFGQLIIMIVYLPIFALTGV), 487–507 (ALLGAMILSVTFVPAAVALFI), 534–554 (LANTAVVLTFAAVSIVLCVAI), 883–903 (VVVPVALLLVFVLLFAMFNNI), 906–926 (GLLVFTGIPFALTGGILALWI), 937–957 (VGFIALCGVAVLNGLVMLSFI), 981–1001 (PVLMTALVASLGFVPMAIATG), and 1013–1033 (VVIGGILSSTALTLLVLPVLY). A disordered region spans residues 1040–1063 (DEDAEDTREPVTQTHQPDQGRQPA). Residues 1049 to 1063 (PVTQTHQPDQGRQPA) are compositionally biased toward polar residues.

Belongs to the resistance-nodulation-cell division (RND) (TC 2.A.6) family.

The protein resides in the cell inner membrane. Its function is as follows. Has a low cation transport activity for cobalt, it is essential for the expression of cobalt, zinc, and cadmium resistance. CzcA and CzcB together would act in zinc efflux nearly as effectively as the complete CZC efflux system (CzcABC). The chain is Cobalt-zinc-cadmium resistance protein CzcA (czcA) from Cupriavidus metallidurans (strain ATCC 43123 / DSM 2839 / NBRC 102507 / CH34) (Ralstonia metallidurans).